Consider the following 163-residue polypeptide: Putative 4-hydroxy-4-methyl-2-oxoglutarate aldolase (163 aa).

Substrate-binding positions include 76-79 (GDML) and Arg-98. Asp-99 contacts a divalent metal cation.

The protein belongs to the class II aldolase/RraA-like family. As to quaternary structure, homotrimer. Requires a divalent metal cation as cofactor.

It catalyses the reaction 4-hydroxy-4-methyl-2-oxoglutarate = 2 pyruvate. The enzyme catalyses oxaloacetate + H(+) = pyruvate + CO2. In terms of biological role, catalyzes the aldol cleavage of 4-hydroxy-4-methyl-2-oxoglutarate (HMG) into 2 molecules of pyruvate. Also contains a secondary oxaloacetate (OAA) decarboxylase activity due to the common pyruvate enolate transition state formed following C-C bond cleavage in the retro-aldol and decarboxylation reactions. This chain is Putative 4-hydroxy-4-methyl-2-oxoglutarate aldolase, found in Pseudomonas fluorescens (strain ATCC BAA-477 / NRRL B-23932 / Pf-5).